We begin with the raw amino-acid sequence, 1071 residues long: DNA-directed RNA polymerase subunit beta (1071 aa).

The protein belongs to the RNA polymerase beta chain family. In plastids the minimal PEP RNA polymerase catalytic core is composed of four subunits: alpha, beta, beta', and beta''. When a (nuclear-encoded) sigma factor is associated with the core the holoenzyme is formed, which can initiate transcription.

The protein localises to the plastid. It localises to the chloroplast. It carries out the reaction RNA(n) + a ribonucleoside 5'-triphosphate = RNA(n+1) + diphosphate. DNA-dependent RNA polymerase catalyzes the transcription of DNA into RNA using the four ribonucleoside triphosphates as substrates. The chain is DNA-directed RNA polymerase subunit beta from Adiantum capillus-veneris (Maidenhair fern).